Consider the following 541-residue polypeptide: MDKQESFFVGHKSHRCSQNRSVSQIHQRTSRLSECYTVPLQWPHGIVWHNNNSLLKGLEAGNGQSVQTDPSKSGFVGDTVELKCLFINGKPPVKISQVTWQKLINGTKQNVAIANPALGVSVLTPFKDRVSFKHPAVRQRTPSSLEDTTIVFSSLRLSDEAAYICEYTTFPAGNRENMVNLTVFARPVTKMTLTSPTIVARTPKRKMPVATCMSANGKPPSVIKWDTTLKGEATFQETRNPNGTVTVRSNYIVLPSRETHRQKLTCIVTYRSERFTDSVILNVQYEPEVKIEGFDGNWYLNRPNVQLTCNADANPPVTVYQWKLLNGSLPNNIEIKNNTLFFKGPVTYELGGTYVCEATNSIGTRSGLVEVNVTELPNIPFDEREIPAELHSSGAAIGGAVGGVALLVAAIALLVFFLRRRQRTFKGDYSTKKHVFGNGYSKAGGMPAHPPMPKNLQYPDDSDDEKKPAQISGPGGFESGDRDFDGNSEDLKRPYFTVDEGESRDYDERTLAFQYDPEPEIADDMVSQTDGSVISKKEWYV.

A signal peptide spans 1–21; that stretch reads MDKQESFFVGHKSHRCSQNRS. Topologically, residues 22–396 are extracellular; that stretch reads VSQIHQRTSR…PAELHSSGAA (375 aa). 7 N-linked (GlcNAc...) asparagine glycosylation sites follow: N51, N105, N180, N242, N326, N337, and N372. The Ig-like V-type domain occupies 77-182; that stretch reads GDTVELKCLF…GNRENMVNLT (106 aa). A disulfide bond links C84 and C165. 2 consecutive Ig-like C2-type domains span residues 187-282 and 287-374; these read PVTK…VILN and PEVK…VNVT. 2 disulfide bridges follow: C212–C266 and C309–C356. Residues 397–417 form a helical membrane-spanning segment; that stretch reads IGGAVGGVALLVAAIALLVFF. At 418–541 the chain is on the cytoplasmic side; it reads LRRRQRTFKG…SVISKKEWYV (124 aa). Residues 440-507 are disordered; the sequence is YSKAGGMPAH…VDEGESRDYD (68 aa). Positions 479 to 493 are enriched in basic and acidic residues; the sequence is SGDRDFDGNSEDLKR.

Belongs to the nectin family. In terms of assembly, cis- and trans-homodimer. Can form trans-heterodimers. As to expression, expressed in the developing eye and nervous system.

It is found in the cell membrane. The protein resides in the cell junction. Its subcellular location is the adherens junction. Its function is as follows. Cell adhesion molecule that promotes cell-cell contacts and plays important roles in the development of the nervous system. Acts by forming homophilic or heterophilic trans-dimers. This Danio rerio (Zebrafish) protein is Nectin 1b.